Consider the following 410-residue polypeptide: Translation initiation factor 2 subunit gamma (410 aa).

In terms of domain architecture, tr-type G spans Gln6–Lys203. The segment at Gly15–Thr22 is G1. 4 residues coordinate Mg(2+): Asp18, Thr22, Gly43, and Ser45. Asp18 to Ser23 contributes to the GTP binding site. The G2 stretch occupies residues Gly43 to Arg47. 4 residues coordinate Zn(2+): Cys58, Cys61, Cys73, and Cys76. Positions Asp90–Gly93 are G3. GTP contacts are provided by residues Asn146–Asp149 and Ser181–His183. Positions Asn146–Asp149 are G4. The G5 stretch occupies residues Ser181 to His183.

Belongs to the TRAFAC class translation factor GTPase superfamily. Classic translation factor GTPase family. EIF2G subfamily. Heterotrimer composed of an alpha, a beta and a gamma chain. It depends on Mg(2+) as a cofactor.

It carries out the reaction GTP + H2O = GDP + phosphate + H(+). Its function is as follows. eIF-2 functions in the early steps of protein synthesis by forming a ternary complex with GTP and initiator tRNA. This Methanococcus vannielii (strain ATCC 35089 / DSM 1224 / JCM 13029 / OCM 148 / SB) protein is Translation initiation factor 2 subunit gamma.